Here is a 185-residue protein sequence, read N- to C-terminus: MINDIKKDADARMKKSVEALNANFHKIRTGRAHPSLLDAVTVEYYGSEMPLNQVASVNVEDARTLAVVPWEKSMVPKVEKAIMTSDLGLNPAAAGNVIRVPLPPLTEETRRNYIKQARGEAENARVAVRNVRRDANGDLKSLLKEKEITEDEERHAIDEIQKLTDKYVTEIDKLLETKEHDLLQV.

The protein belongs to the RRF family.

It localises to the cytoplasm. In terms of biological role, responsible for the release of ribosomes from messenger RNA at the termination of protein biosynthesis. May increase the efficiency of translation by recycling ribosomes from one round of translation to another. The chain is Ribosome-recycling factor from Chromohalobacter salexigens (strain ATCC BAA-138 / DSM 3043 / CIP 106854 / NCIMB 13768 / 1H11).